Reading from the N-terminus, the 917-residue chain is MFAVHLMAFYFSKLKEDQIKKVDRFLYHMRLSDDTLLDIMRRFRAEMEKGLAKDTNPTAAVKMLPTFVRAIPDGSENGEFLSLDLGGSKFRVLKVQVAEEGKRHVQMESQFYPTPNEIIRGNGTELFEYVADCLADFMKTKDLKHKKLPLGLTFSFPCRQTKLEEGVLLSWTKKFKARGVQDTDVVSRLTKAMRRHKDMDVDILALVNDTVGTMMTCAYDDPYCEVGVIIGTGTNACYMEDMSNIDLVEGDEGRMCINTEWGAFGDDGALEDIRTEFDRELDLGSLNPGKQLFEKMISGLYLGELVRLILLKMAKAGLLFGGEKSSALHTKGKIETRHVAAMEKYKEGLANTREILVDLGLEPSEADCIAVQHVCTIVSFRSANLCAAALAAILTRLRENKKVERLRTTVGMDGTLYKIHPQYPKRLHKVVRKLVPSCDVRFLLSESGSTKGAAMVTAVASRVQAQRKQIDRVLALFQLTREQLVDVQAKMRAELEYGLKKKSHGLATVRMLPTYVCGLPDGTEKGKFLALDLGGTNFRVLLVKIRSGRRSVRMYNKIFAIPLEIMQGTGEELFDHIVQCIADFLDYMGLKGASLPLGFTFSFPCRQMSIDKGTLIGWTKGFKATDCEGEDVVDMLREAIKRRNEFDLDIVAVVNDTVGTMMTCGYEDPNCEIGLIAGTGSNMCYMEDMRNIEMVEGGEGKMCINTEWGGFGDNGCIDDIWTRYDTEVDEGSLNPGKQRYEKMTSGMYLGEIVRQILIDLTKQGLLFRGQISERLRTRGIFETKFLSQIESDRLALLQVRRILQQLGLDSTCEDSIVVKEVCGAVSRRAAQLCGAGLAAIVEKRREDQGLEHLRITVGVDGTLYKLHPHFSRILQETVKELAPRCDVTFMLSEDGSGKGAALITAVAKRLQQAQKEN.

Residues 1–20 (MFAVHLMAFYFSKLKEDQIK) are mitochondrial-binding peptide (MBP). 2 consecutive Hexokinase domains span residues 16–458 (EDQI…MVTA) and 464–905 (QAQR…LITA). ATP contacts are provided by residues arginine 30 and 84–89 (DLGGSK). Positions 73-207 (DGSENGEFLS…DMDVDILALV (135 aa)) are hexokinase small subdomain 1. 84-91 (DLGGSKFR) is a D-glucose 6-phosphate binding site. D-glucose-binding positions include serine 155, 172 to 173 (TK), and 208 to 209 (ND). The segment at 208–447 (NDTVGTMMTC…CDVRFLLSES (240 aa)) is hexokinase large subdomain 1. Residues aspartate 209 and threonine 232 each coordinate D-glucose 6-phosphate. D-glucose-binding positions include asparagine 235, glutamate 260, and 291-294 (QLFE). Residue 413–415 (DGT) coordinates D-glucose 6-phosphate. Position 425–426 (425–426 (KR)) interacts with ATP. D-glucose 6-phosphate contacts are provided by residues serine 449 and 532-536 (DLGGT). A hexokinase small subdomain 2 region spans residues 521 to 654 (DGTEKGKFLA…EFDLDIVAVV (134 aa)). 532-537 (DLGGTN) provides a ligand contact to ATP. D-glucose contacts are provided by residues 602-603 (SF), 619-620 (TK), and 655-656 (ND). The hexokinase large subdomain 2 stretch occupies residues 655–894 (NDTVGTMMTC…CDVTFMLSED (240 aa)). The D-glucose 6-phosphate site is built by aspartate 656 and threonine 679. An ATP-binding site is contributed by threonine 679. D-glucose-binding positions include 681-682 (SN), glutamate 707, and glutamate 741. Residues 746-747 (GM), 783-787 (TKFLS), and 862-866 (TLYKL) each bind ATP. D-glucose 6-phosphate contacts are provided by residues 860–862 (DGT) and serine 896.

It belongs to the hexokinase family. Widely expressed. Highly expressed in the brush border, surface epithelium and the myenteric plexus of the small and large intestines; the acinar centrocytes and interlobular ducts of the pancreas; and the alveolar macrophages in the lungs (at protein level). Present at moderate level in the thyroid follicular epithelium (at protein level).

The protein resides in the cytoplasm. It localises to the mitochondrion membrane. It is found in the photoreceptor inner segment. It carries out the reaction a D-hexose + ATP = a D-hexose 6-phosphate + ADP + H(+). The catalysed reaction is D-glucose + ATP = D-glucose 6-phosphate + ADP + H(+). The protein operates within carbohydrate metabolism; hexose metabolism. Its pathway is carbohydrate degradation; glycolysis; D-glyceraldehyde 3-phosphate and glycerone phosphate from D-glucose: step 1/4. In terms of biological role, catalyzes the phosphorylation of hexose to hexose 6-phosphate, although at very low level compared to other hexokinases. Has low glucose phosphorylating activity compared to other hexokinases. Involved in glucose homeostasis and hepatic lipid accumulation. Required to maintain whole-body glucose homeostasis during pregnancy; however additional evidences are required to confirm this role. The sequence is that of Hexokinase HKDC1 from Homo sapiens (Human).